Here is a 177-residue protein sequence, read N- to C-terminus: Large ribosomal subunit protein uL6 (177 aa).

This sequence belongs to the universal ribosomal protein uL6 family. As to quaternary structure, part of the 50S ribosomal subunit.

Its function is as follows. This protein binds to the 23S rRNA, and is important in its secondary structure. It is located near the subunit interface in the base of the L7/L12 stalk, and near the tRNA binding site of the peptidyltransferase center. The polypeptide is Large ribosomal subunit protein uL6 (Methylorubrum extorquens (strain CM4 / NCIMB 13688) (Methylobacterium extorquens)).